Consider the following 236-residue polypeptide: Small ribosomal subunit protein uS2c (236 aa).

The protein belongs to the universal ribosomal protein uS2 family.

It localises to the plastid. The protein resides in the chloroplast. This is Small ribosomal subunit protein uS2c (rps2) from Oenothera biennis (German evening primrose).